A 273-amino-acid polypeptide reads, in one-letter code: MSCSFQLSLVPSPPNLKMSIRNIINDPFATGSLSLAAMSWIITFISSIVADVQGSFPKLTWWGIVFELFVILFLAVLYIVDDIQPHRLSIVGFLAIATVYTTNSANSLVYSNTSAKNCAAAGSILLSMINLIWLFYYGTDIANSVLVARVFGKQGSNPFTTPQPNRTYTPNDINNTNTNYMSSGQLTGLEKGVDSNAYGNHDDSDDELSADDHYPITVRALYNYDANPEDINELSLKQGEVFKVKDTAGKWWQAKKQSGELGICPSNYVETLH.

Over 1–27 (MSCSFQLSLVPSPPNLKMSIRNIINDP) the chain is Cytoplasmic. Residues 28–48 (FATGSLSLAAMSWIITFISSI) traverse the membrane as a helical segment. Over 49–59 (VADVQGSFPKL) the chain is Extracellular. Residues 60-80 (TWWGIVFELFVILFLAVLYIV) traverse the membrane as a helical segment. The Cytoplasmic portion of the chain corresponds to 81 to 89 (DDIQPHRLS). The helical transmembrane segment at 90–110 (IVGFLAIATVYTTNSANSLVY) threads the bilayer. Residues 111–117 (SNTSAKN) lie on the Extracellular side of the membrane. Asn112 carries an N-linked (GlcNAc...) asparagine glycan. The chain crosses the membrane as a helical span at residues 118-138 (CAAAGSILLSMINLIWLFYYG). Topologically, residues 139-273 (TDIANSVLVA…CPSNYVETLH (135 aa)) are cytoplasmic. Positions 213-273 (HYPITVRALY…CPSNYVETLH (61 aa)) constitute an SH3 domain.

This sequence belongs to the SHO1 family. In terms of assembly, forms homooligomers.

It is found in the cell membrane. Its function is as follows. Plasma membrane osmosensor that activates the high osmolarity glycerol (HOG) MAPK signaling pathway in response to high osmolarity. The protein is High osmolarity signaling protein SHO1 (SHO1) of Komagataella phaffii (strain GS115 / ATCC 20864) (Yeast).